Reading from the N-terminus, the 303-residue chain is Oxygen-dependent coproporphyrinogen-III oxidase (303 aa).

Residue S93 coordinates substrate. Residues H97 and H107 each contribute to the a divalent metal cation site. Catalysis depends on H107, which acts as the Proton donor. 109–111 (NVR) contributes to the substrate binding site. Positions 149 and 179 each coordinate a divalent metal cation. The important for dimerization stretch occupies residues 244-279 (YVEFNLVFDRGTLFGLQSGGRTESILLSMPPLAQWR). 262-264 (GGR) contacts substrate.

Belongs to the aerobic coproporphyrinogen-III oxidase family. In terms of assembly, homodimer. The cofactor is a divalent metal cation.

The protein resides in the cytoplasm. The enzyme catalyses coproporphyrinogen III + O2 + 2 H(+) = protoporphyrinogen IX + 2 CO2 + 2 H2O. It functions in the pathway porphyrin-containing compound metabolism; protoporphyrin-IX biosynthesis; protoporphyrinogen-IX from coproporphyrinogen-III (O2 route): step 1/1. In terms of biological role, involved in the heme biosynthesis. Catalyzes the aerobic oxidative decarboxylation of propionate groups of rings A and B of coproporphyrinogen-III to yield the vinyl groups in protoporphyrinogen-IX. This is Oxygen-dependent coproporphyrinogen-III oxidase from Bordetella parapertussis (strain 12822 / ATCC BAA-587 / NCTC 13253).